The primary structure comprises 248 residues: UDP-2,3-diacylglucosamine hydrolase (248 aa).

Mn(2+)-binding residues include aspartate 7, histidine 9, aspartate 40, asparagine 78, and histidine 113. 78 to 79 contacts substrate; that stretch reads NR. Positions 121, 159, 163, 166, and 194 each coordinate substrate. 2 residues coordinate Mn(2+): histidine 194 and histidine 196.

This sequence belongs to the LpxH family. Mn(2+) is required as a cofactor.

Its subcellular location is the cell inner membrane. It carries out the reaction UDP-2-N,3-O-bis[(3R)-3-hydroxytetradecanoyl]-alpha-D-glucosamine + H2O = 2-N,3-O-bis[(3R)-3-hydroxytetradecanoyl]-alpha-D-glucosaminyl 1-phosphate + UMP + 2 H(+). Its pathway is glycolipid biosynthesis; lipid IV(A) biosynthesis; lipid IV(A) from (3R)-3-hydroxytetradecanoyl-[acyl-carrier-protein] and UDP-N-acetyl-alpha-D-glucosamine: step 4/6. Hydrolyzes the pyrophosphate bond of UDP-2,3-diacylglucosamine to yield 2,3-diacylglucosamine 1-phosphate (lipid X) and UMP by catalyzing the attack of water at the alpha-P atom. Involved in the biosynthesis of lipid A, a phosphorylated glycolipid that anchors the lipopolysaccharide to the outer membrane of the cell. This chain is UDP-2,3-diacylglucosamine hydrolase, found in Pseudomonas fluorescens (strain Pf0-1).